The primary structure comprises 146 residues: Leptin (146 aa).

The cysteines at positions 96 and 146 are disulfide-linked.

Belongs to the leptin family.

Its subcellular location is the secreted. In terms of biological role, key player in the regulation of energy balance and body weight control. Once released into the circulation, has central and peripheral effects by binding LEPR, found in many tissues, which results in the activation of several major signaling pathways. In the hypothalamus, acts as an appetite-regulating factor that induces a decrease in food intake and an increase in energy consumption by inducing anorexinogenic factors and suppressing orexigenic neuropeptides, also regulates bone mass and secretion of hypothalamo-pituitary-adrenal hormones. In the periphery, increases basal metabolism, influences reproductive function, regulates pancreatic beta-cell function and insulin secretion, is pro-angiogenic for endothelial cell and affects innate and adaptive immunity. In the arcuate nucleus of the hypothalamus, activates by depolarization POMC neurons inducing FOS and SOCS3 expression to release anorexigenic peptides and inhibits by hyperpolarization NPY neurons inducing SOCS3 with a consequent reduction on release of orexigenic peptides. In addition to its known satiety inducing effect, has a modulatory role in nutrient absorption. In the intestine, reduces glucose absorption by enterocytes by activating PKC and leading to a sequential activation of p38, PI3K and ERK signaling pathways which exerts an inhibitory effect on glucose absorption. Acts as a growth factor on certain tissues, through the activation of different signaling pathways increases expression of genes involved in cell cycle regulation such as CCND1, via JAK2-STAT3 pathway, or VEGFA, via MAPK1/3 and PI3K-AKT1 pathways. May also play an apoptotic role via JAK2-STAT3 pathway and up-regulation of BIRC5 expression. Pro-angiogenic, has mitogenic activity on vascular endothelial cells and plays a role in matrix remodeling by regulating the expression of matrix metalloproteinases (MMPs) and tissue inhibitors of metalloproteinases (TIMPs). In innate immunity, modulates the activity and function of neutrophils by increasing chemotaxis and the secretion of oxygen radicals. Increases phagocytosis by macrophages and enhances secretion of pro-inflammatory mediators. Increases cytotoxic ability of NK cells. Plays a pro-inflammatory role, in synergy with IL1B, by inducing NOS2 which promotes the production of IL6, IL8 and Prostaglandin E2, through a signaling pathway that involves JAK2, PI3K, MAP2K1/MEK1 and MAPK14/p38. In adaptive immunity, promotes the switch of memory T-cells towards T helper-1 cell immune responses. Increases CD4(+)CD25(-) T-cell proliferation and reduces autophagy during TCR (T-cell receptor) stimulation, through MTOR signaling pathway activation and BCL2 up-regulation. The polypeptide is Leptin (LEP) (Ovis aries (Sheep)).